Here is an 878-residue protein sequence, read N- to C-terminus: Fanconi-associated nuclease 1 homolog (878 aa).

The UBZ4-type zinc finger occupies 32-59 (GKTCPLCNIKFSLASYRSHMNVCKVADD). Zn(2+) contacts are provided by Cys-35, Cys-38, His-50, and Cys-54. The tract at residues 88–180 (ENSGQEIPVN…QKSQSESQEA (93 aa)) is disordered. Residues 142 to 161 (SEVRSVEKEIKKSPVWENRR) show a composition bias toward basic and acidic residues. Residues 168–179 (QNSQKSQSESQE) show a composition bias toward low complexity. Residues Glu-695, Asp-823, Glu-838, and Val-839 each contribute to the Mn(2+) site. In terms of domain architecture, VRR-NUC spans 757–870 (QETIEDNIRR…GIKAEVCHVE (114 aa)).

The protein belongs to the FAN1 family. Mn(2+) serves as cofactor. It depends on Mg(2+) as a cofactor.

It localises to the nucleus. It catalyses the reaction Hydrolytically removes 5'-nucleotides successively from the 3'-hydroxy termini of 3'-hydroxy-terminated oligonucleotides.. In terms of biological role, nuclease required for the repair of DNA interstrand cross-links (ICL). Acts as a 5'-3' exonuclease that anchors at a cut end of DNA and cleaves DNA successively at every third nucleotide, allowing to excise an ICL from one strand through flanking incisions. The polypeptide is Fanconi-associated nuclease 1 homolog (fan-1) (Caenorhabditis briggsae).